The following is a 477-amino-acid chain: RTX-I toxin determinant D (477 aa).

The Cytoplasmic segment spans residues 1 to 59 (MKTWLMGLYEFFQAYKTVWTEIWKIRHQLDTPDREKDENEFLPAHLELIETPVSKKPRL). Residues 60–80 (IAYLIMLFLFLALVISIVSHV) traverse the membrane as a helical segment. The Periplasmic portion of the chain corresponds to 81–477 (EIVATATGKL…ESVSESLRER (397 aa)).

This sequence belongs to the membrane fusion protein (MFP) (TC 8.A.1) family.

Its subcellular location is the cell inner membrane. In terms of biological role, involved in the transport of the toxin RTX-I as well as that of RTX-II. In Actinobacillus pleuropneumoniae (Haemophilus pleuropneumoniae), this protein is RTX-I toxin determinant D (apxID).